Here is a 321-residue protein sequence, read N- to C-terminus: NADPH-dependent codeinone reductase 1-2 (321 aa).

The NADPH site is built by Thr-27 and Asp-51. Residues Tyr-56 and His-119 each act as proton donor in the active site. Substrate is bound at residue His-119. Ser-165, Gln-187, Ser-214, Leu-216, Ser-264, and Arg-269 together coordinate NADPH. A disordered region spans residues Ser-299–Asp-321.

This sequence belongs to the aldo/keto reductase family. As to expression, latex secreting cells (laticifer cells). Expressed constitutively in all organs with highest levels in capsules. Restricted to the parietal region of sieve elements adjacent or proximal to laticifers in roots, stems, leaves and carpels.

It localises to the cytoplasm. It is found in the cytosol. The enzyme catalyses codeine + NADP(+) = codeinone + NADPH + H(+). The catalysed reaction is neopine + NADP(+) = neopinone + NADPH + H(+). It catalyses the reaction morphine + NADP(+) = morphinone + NADPH + H(+). It carries out the reaction neomorphine + NADP(+) = neomorphinone + NADPH + H(+). The protein operates within alkaloid biosynthesis; morphine biosynthesis. Functionally, NADPH-dependent codeinone reductase involved in biosynthesis of morphinan-type benzylisoquinoline and opiate alkaloids natural products. Reduces codeinone to codeine in the penultimate step in morphine biosynthesis. Can use morphinone, hydrocodone and hydromorphone as substrate during reductive reaction with NADPH as cofactor, and morphine and dihydrocodeine as substrate during oxidative reaction with NADP as cofactor. Converts morphinone to morphine, and neomorphinone to neomorphine. Reduces irreversibly neopinone, a spontaneous isomer of codeinone, to neopine; in planta, neopine levels are limited to low levels. The chain is NADPH-dependent codeinone reductase 1-2 from Papaver somniferum (Opium poppy).